A 906-amino-acid polypeptide reads, in one-letter code: MLSILKKLFGTANDRTVKKLFSEITKINSLEPAIQKLSDEELKNKTVEFKEKLKNGATLDDIVYEAFAVVREAARRVCGMRHFDVQLIGGLILHRGMITEMRTGEGKTLVATLPAYLNALTGKGVHVVTVNDYLASRDSASMGKIYNFLGLSVGCIVGGMPDEIKRAAYNADITHATNNELGFDYLRDNMKYSLQERVLRPFNFAIIDEVDSILIDEARTPLVISGPVNDNSELYGKIDKIVRLLNASDFEKDEKLKTINLTETGITHIESLLSKENIIKPDTGLYDFENLTLVHYVNQALRAHNMFTVNVDYLVREGKVMIIDEFTGRVMEGRRYSEGLHQALEAKENVKIQNENQTLASITFQNYFRNYPKLSGMTGTAMTEAPELKDIYNLDVVAVPTHNKVTRLDLDDEIYGSKKEKYDAILKLIKDCYDRGQPILVGTISIEKSEELSSVLNKEKIPHKVLNAKFHEQEAFIIAQAGRFKAVTIATNMAGRGTDIMLGGNPEMLIEQLDKEHNYEAKIAEIKAQIAEEKKQVIEAGGLFVIGTERHESRRIDNQLRGRSGRQGDPGKTKFFLSLDDDLMRIFASDRISGVLRTLGLKDGEAIHHPMISRSLEKAQQKVEGHNYEMRKNLLRFDDVMNDQRKIIYEQRTEIIKSKDSHGFLNSTTEELAKKIVLTFMPVGSYREDWDIENLSVELHRVFSIKFDHNVVSKNDVTEEEITKTVIQMAHDIYKSKEEAYSSELMHNAVKYILLTTLDQVWKDHLYSLDHLRQGISLRAYAQKDPLSEYKREAFNLFEQMLNNLKELFIQTVYHFHIDLKHVQKEDVSLEYKKLQQNMRESREDPAFSKYNAGSSLETDLKPVVSRIDPKDRNPDDPTSWGRVSRNELCPCGSGKKYKYCHGAHE.

Residues glutamine 86, 104 to 108 (GEGKT), and aspartate 499 contribute to the ATP site. Residues 862–885 (KPVVSRIDPKDRNPDDPTSWGRVS) form a disordered region. Zn(2+) is bound by residues cysteine 890, cysteine 892, cysteine 901, and histidine 902.

Belongs to the SecA family. In terms of assembly, monomer and homodimer. Part of the essential Sec protein translocation apparatus which comprises SecA, SecYEG and auxiliary proteins SecDF-YajC and YidC. Requires Zn(2+) as cofactor.

Its subcellular location is the cell inner membrane. The protein resides in the cytoplasm. The catalysed reaction is ATP + H2O + cellular proteinSide 1 = ADP + phosphate + cellular proteinSide 2.. In terms of biological role, part of the Sec protein translocase complex. Interacts with the SecYEG preprotein conducting channel. Has a central role in coupling the hydrolysis of ATP to the transfer of proteins into and across the cell membrane, serving both as a receptor for the preprotein-SecB complex and as an ATP-driven molecular motor driving the stepwise translocation of polypeptide chains across the membrane. The polypeptide is Protein translocase subunit SecA (Rickettsia massiliae (strain Mtu5)).